Consider the following 353-residue polypeptide: Sorbitol dehydrogenase (353 aa).

Cysteine 45 contacts Zn(2+). Tyrosine 51 contributes to the substrate binding site. Zn(2+) contacts are provided by histidine 70 and glutamate 71. Substrate is bound at residue glutamate 156. NAD(+) contacts are provided by residues valine 184, aspartate 204, arginine 209, 271-273 (VGL), and 296-298 (IFR). Arginine 298 and tyrosine 299 together coordinate substrate.

The protein belongs to the zinc-containing alcohol dehydrogenase family. In terms of assembly, homotetramer. Requires Zn(2+) as cofactor.

The enzyme catalyses keto-D-fructose + NADH + H(+) = D-sorbitol + NAD(+). It catalyses the reaction xylitol + NAD(+) = D-xylulose + NADH + H(+). The catalysed reaction is L-iditol + NAD(+) = keto-L-sorbose + NADH + H(+). In terms of biological role, polyol dehydrogenase that catalyzes the NAD(+)-dependent oxidation of various sugar alcohols. Is mostly active with D-sorbitol (D-glucitol), xylitol and L-iditol as substrates, leading to the C2-oxidized products D-fructose, D-xylulose and L-sorbose, respectively. The chain is Sorbitol dehydrogenase from Bacillus subtilis (strain 168).